The primary structure comprises 396 residues: S-adenosylmethionine synthase (396 aa).

Residue H16 coordinates ATP. A Mg(2+)-binding site is contributed by D18. Position 44 (E44) interacts with K(+). Residues E57 and Q100 each coordinate L-methionine. Residues 100–110 are flexible loop; the sequence is QSPDIAQGVNE. Residues 175–177, 242–243, D251, 257–258, A274, and K278 contribute to the ATP site; these read DAK, RF, and RK. D251 contacts L-methionine. K282 lines the L-methionine pocket.

It belongs to the AdoMet synthase family. Homotetramer; dimer of dimers. It depends on Mg(2+) as a cofactor. K(+) serves as cofactor.

It localises to the cytoplasm. The enzyme catalyses L-methionine + ATP + H2O = S-adenosyl-L-methionine + phosphate + diphosphate. It functions in the pathway amino-acid biosynthesis; S-adenosyl-L-methionine biosynthesis; S-adenosyl-L-methionine from L-methionine: step 1/1. Catalyzes the formation of S-adenosylmethionine (AdoMet) from methionine and ATP. The overall synthetic reaction is composed of two sequential steps, AdoMet formation and the subsequent tripolyphosphate hydrolysis which occurs prior to release of AdoMet from the enzyme. The polypeptide is S-adenosylmethionine synthase (Streptococcus suis (strain 05ZYH33)).